Here is a 366-residue protein sequence, read N- to C-terminus: Protein RecA (366 aa).

81 to 88 (GPESSGKT) lines the ATP pocket.

Belongs to the RecA family.

Its subcellular location is the cytoplasm. Its function is as follows. Can catalyze the hydrolysis of ATP in the presence of single-stranded DNA, the ATP-dependent uptake of single-stranded DNA by duplex DNA, and the ATP-dependent hybridization of homologous single-stranded DNAs. It interacts with LexA causing its activation and leading to its autocatalytic cleavage. The polypeptide is Protein RecA (Leptospira interrogans serogroup Icterohaemorrhagiae serovar copenhageni (strain Fiocruz L1-130)).